Reading from the N-terminus, the 269-residue chain is dITP/XTP pyrophosphatase (269 aa).

Residue 22 to 27 participates in substrate binding; sequence SNNAHK. Residue Asp-82 is the Proton acceptor of the active site. Asp-82 contributes to the Mg(2+) binding site. Substrate is bound by residues Ser-83, 165–168, Lys-188, and 193–194; these read FGYD and HR.

It belongs to the HAM1 NTPase family. In terms of assembly, homodimer. Mg(2+) serves as cofactor.

The catalysed reaction is XTP + H2O = XMP + diphosphate + H(+). The enzyme catalyses dITP + H2O = dIMP + diphosphate + H(+). It carries out the reaction ITP + H2O = IMP + diphosphate + H(+). Pyrophosphatase that catalyzes the hydrolysis of nucleoside triphosphates to their monophosphate derivatives, with a high preference for the non-canonical purine nucleotides XTP (xanthosine triphosphate), dITP (deoxyinosine triphosphate) and ITP. Seems to function as a house-cleaning enzyme that removes non-canonical purine nucleotides from the nucleotide pool, thus preventing their incorporation into DNA/RNA and avoiding chromosomal lesions. This chain is dITP/XTP pyrophosphatase, found in Treponema pallidum (strain Nichols).